The sequence spans 199 residues: Large ribosomal subunit protein uL5 (199 aa).

It belongs to the universal ribosomal protein uL5 family. Part of the 50S ribosomal subunit; part of the 5S rRNA/L5/L18/L25 subcomplex. Contacts the 5S rRNA and the P site tRNA. Forms a bridge to the 30S subunit in the 70S ribosome.

Functionally, this is one of the proteins that bind and probably mediate the attachment of the 5S RNA into the large ribosomal subunit, where it forms part of the central protuberance. In the 70S ribosome it contacts protein S13 of the 30S subunit (bridge B1b), connecting the 2 subunits; this bridge is implicated in subunit movement. Contacts the P site tRNA; the 5S rRNA and some of its associated proteins might help stabilize positioning of ribosome-bound tRNAs. The polypeptide is Large ribosomal subunit protein uL5 (Frankia casuarinae (strain DSM 45818 / CECT 9043 / HFP020203 / CcI3)).